Reading from the N-terminus, the 440-residue chain is Glutamyl-tRNA reductase (440 aa).

Substrate is bound by residues 55–58 (TCNR), Ser-115, 120–122 (ETQ), and Gln-126. The active-site Nucleophile is the Cys-56. Position 199–204 (199–204 (GSGEMG)) interacts with NADP(+).

The protein belongs to the glutamyl-tRNA reductase family. Homodimer.

The enzyme catalyses (S)-4-amino-5-oxopentanoate + tRNA(Glu) + NADP(+) = L-glutamyl-tRNA(Glu) + NADPH + H(+). It functions in the pathway porphyrin-containing compound metabolism; protoporphyrin-IX biosynthesis; 5-aminolevulinate from L-glutamyl-tRNA(Glu): step 1/2. In terms of biological role, catalyzes the NADPH-dependent reduction of glutamyl-tRNA(Glu) to glutamate 1-semialdehyde (GSA). This Helicobacter hepaticus (strain ATCC 51449 / 3B1) protein is Glutamyl-tRNA reductase.